Consider the following 666-residue polypeptide: Neopullulanase 1 (666 aa).

The first 29 residues, 1-29, serve as a signal peptide directing secretion; the sequence is MIKLLKPMSLSILLVFILSFSFPFPTAKA. Ca(2+) is bound by residues alanine 31, aspartate 33, asparagine 35, aspartate 71, aspartate 125, asparagine 174, aspartate 176, asparagine 179, aspartate 180, glycine 216, and aspartate 218. Histidine 296 is a substrate binding site. Ca(2+) contacts are provided by aspartate 305, asparagine 309, phenylalanine 310, serine 312, and glutamate 317. Arginine 383 lines the substrate pocket. Aspartate 385 acts as the Nucleophile in catalysis. Glutamate 425 serves as the catalytic Proton donor. Residues 500-501, aspartate 545, and arginine 549 contribute to the substrate site; that span reads HD.

This sequence belongs to the glycosyl hydrolase 13 family. Requires Ca(2+) as cofactor.

The protein localises to the secreted. The enzyme catalyses Hydrolysis of pullulan to panose (6-alpha-D-glucosylmaltose).. Endohydrolysis of 1,4-alpha-glucosidic linkages in pullulan to form panose. Also hydrolyzes cyclodextrins. This is Neopullulanase 1 (tvaI) from Thermoactinomyces vulgaris.